The chain runs to 365 residues: Serine protease 40 (365 aa).

Positions 1–34 are cleaved as a signal peptide; the sequence is MCGIRAKKSGLGGYGAGLLAALLGVSFLSQHAQT. Asparagine 44 carries an N-linked (GlcNAc...) asparagine glycan. Residues 69–313 form the Peptidase S1 domain; it reads IYGGQIAGAE…FDKWIKDNKK (245 aa). Cysteine 94 and cysteine 110 are oxidised to a cystine. Residues histidine 109 and aspartate 159 each act as charge relay system in the active site. Disulfide bonds link cysteine 193-cysteine 270, cysteine 226-cysteine 249, and cysteine 260-cysteine 288. Residue serine 264 is the Charge relay system of the active site. The segment at 312–343 is disordered; that stretch reads KKSSSNSKPGESPHHPGSPENENPEGDNKNQG.

It belongs to the peptidase S1 family. Expressed in testis. More specifically, abundantly expressed in the haploid round spermatid.

The protein resides in the cytoplasmic vesicle. The protein localises to the secretory vesicle. Its subcellular location is the acrosome. It localises to the secreted. May play an important role in the sperm/egg interaction; released during the acrosome reaction. The polypeptide is Serine protease 40 (Prss40) (Mus musculus (Mouse)).